Reading from the N-terminus, the 333-residue chain is Probable G-protein coupled receptor 33 (333 aa).

Topologically, residues 1–30 (MDLINSTDYLINASTLVRNSTQFLAPASKM) are extracellular. Asn5, Asn12, and Asn19 each carry an N-linked (GlcNAc...) asparagine glycan. Residues 31–53 (IIALSLYISSIIGTITNGLYLWV) traverse the membrane as a helical segment. The Cytoplasmic portion of the chain corresponds to 54–64 (LRFKMKQTVNT). The helical transmembrane segment at 65–86 (LLFFHLILSYFISTMILPFMAT) threads the bilayer. Residues 87-103 (SQLQDNHWNFGTALCKV) are Extracellular-facing. A disulfide bridge links Cys101 with Cys179. A helical transmembrane segment spans residues 104 to 124 (FNGTLSLGMFTSVFFLSAIGL). The Cytoplasmic segment spans residues 125–143 (DRYLLTLHPVWSQQHRTPR). The helical transmembrane segment at 144–165 (WASSIVLGVWISAAALSIPYLI) threads the bilayer. Residues 166–209 (FRETHHDRKGKVTCQNNYAVSTNWESKEMQASRQWIHVACFISR) are Extracellular-facing. Residues 210–230 (FLLGFLLPFFIIIFCYERVAS) traverse the membrane as a helical segment. The Cytoplasmic segment spans residues 231-246 (KVKERSLFKSSKPFKV). The chain crosses the membrane as a helical span at residues 247–268 (MMTAIISFFVCWMPYHIHQGLL). The Extracellular segment spans residues 269–283 (LTTNQSLLLELTLIL). Asn272 carries N-linked (GlcNAc...) asparagine glycosylation. The helical transmembrane segment at 284–303 (TVLTTSFNTIFSPTLYLFVG) threads the bilayer. The Cytoplasmic segment spans residues 304–333 (ENFKKVFKKSILALFESTFSEDSSVERTQT).

The protein belongs to the G-protein coupled receptor 1 family. Expressed in spleen, lung, heart, liver, kidney, pancreas, thymus, gonads and leukocytes.

It localises to the cell membrane. In terms of biological role, orphan receptor; could be a chemoattractant receptor. This is Probable G-protein coupled receptor 33 (GPR33) from Homo sapiens (Human).